Reading from the N-terminus, the 354-residue chain is 3'-5' exonuclease (354 aa).

A disordered region spans residues 1–120 (MEKYLIKMPI…PSPEKEKPEK (120 aa)). Composition is skewed to basic and acidic residues over residues 13 to 23 (KASEVPKDKAV), 36 to 50 (TKND…KENA), and 71 to 91 (KNLD…ENPP). Ser-104, Ser-110, and Ser-112 each carry phosphoserine. In terms of domain architecture, 3'-5' exonuclease spans 146–314 (VLQWVEKQKD…GQVIYRELER (169 aa)). Residues Asp-163, Glu-165, and Asp-301 each contribute to the Mg(2+) site.

This sequence belongs to the WRNexo family.

It is found in the nucleus. Functionally, has exonuclease activity on both single-stranded and duplex templates bearing overhangs, but not blunt ended duplex DNA, and cleaves in a 3'-5' direction. Essential for the formation of DNA replication focal centers. Has an important role in maintaining genome stability. In Drosophila erecta (Fruit fly), this protein is 3'-5' exonuclease.